The sequence spans 531 residues: UDP-glucuronosyltransferase 1A6 (531 aa).

An N-terminal signal peptide occupies residues 1 to 26 (MACLLSAAQRASAGVLFVALWGTVLG). Asparagine 294 carries an N-linked (GlcNAc...) asparagine glycan. A helical transmembrane segment spans residues 489–505 (VIGFLLAIVLTVAFVTF).

Belongs to the UDP-glycosyltransferase family.

It is found in the microsome. The protein resides in the endoplasmic reticulum membrane. It catalyses the reaction glucuronate acceptor + UDP-alpha-D-glucuronate = acceptor beta-D-glucuronoside + UDP + H(+). The catalysed reaction is (5Z,8Z,11Z,14Z)-eicosatetraenoate + UDP-alpha-D-glucuronate = O-[(5Z),(8Z),(11Z),(14Z)-eicosatetraenoyl]-beta-D-glucuronate + UDP. The enzyme catalyses 15-hydroxy-(5Z,8Z,11Z,13E)-eicosatetraenoate + UDP-alpha-D-glucuronate = 15-O-(beta-D-glucuronosyl)-(5Z,8Z,11Z,14Z)-eicosatetraenoate + UDP + H(+). It carries out the reaction (E)-ferulate + UDP-alpha-D-glucuronate = (E)-4-O-(beta-D-glucuronosyl)-ferulate + UDP + H(+). It catalyses the reaction (E)-ferulate + UDP-alpha-D-glucuronate = (E)-ferulic acid beta-D-glucuronate ester + UDP. In terms of biological role, UDP-glucuronosyltransferase (UGT) that catalyzes phase II biotransformation reactions in which lipophilic substrates are conjugated with glucuronic acid to facilitate their inactivation and excretion from the body. Essential for the elimination and detoxification of drugs, xenobiotics and endogenous compounds. Involved in the glucuronidation of arachidonic acid (AA) and AA-derived eicosanoids including 15-HETE and 20-HETE. Conjugates small planar phenolic molecules such as 4-nitrophenol, 1-naphthol, and 4-methylumbelliferone. The bulky phenol 4-hydroxybiphenyl, androgens and estrogens are not substrates. 2-hydroxybiphenyl is an excellent substrate. Involved in the glucuronidation of the phytochemical ferulic acid at the phenolic or the carboxylic acid group. In Oryctolagus cuniculus (Rabbit), this protein is UDP-glucuronosyltransferase 1A6 (UGT1).